The primary structure comprises 153 residues: Bacteriohemerythrin (153 aa).

Fe cation contacts are provided by H21, H57, E61, H76, H80, H115, and D120.

It belongs to the hemerythrin family. Monomer.

Oxygen-binding protein. May be involved in a storage mechanism or for delivery to oxygen-requiring enzymes. The oxygen-binding site contains two iron atoms. This Pseudomonas aeruginosa (strain UCBPP-PA14) protein is Bacteriohemerythrin.